The following is a 413-amino-acid chain: uncharacterized protein (413 aa).

The signal sequence occupies residues 1–20 (MRVIIVIMMVVFVVVGTSSG).

This is an uncharacterized protein from Archaeoglobus fulgidus (strain ATCC 49558 / DSM 4304 / JCM 9628 / NBRC 100126 / VC-16).